Consider the following 195-residue polypeptide: RILP-like protein 2 (195 aa).

The region spanning S8 to E92 is the RH1 domain. Residues L58–S149 are a coiled coil. An RH2 domain is found at R115 to T185.

The protein belongs to the RILPL family.

The protein resides in the cytoplasm. Its subcellular location is the cytosol. It is found in the cytoskeleton. It localises to the microtubule organizing center. The protein localises to the centrosome. The protein resides in the cell projection. Its subcellular location is the cilium. Its function is as follows. Involved in cell shape and neuronal morphogenesis, positively regulating the establishment and maintenance of dendritic spines. Plays a role in cellular protein transport. The polypeptide is RILP-like protein 2 (rilpl2) (Danio rerio (Zebrafish)).